We begin with the raw amino-acid sequence, 102 residues long: Small ribosomal subunit protein uS10 (102 aa).

Belongs to the universal ribosomal protein uS10 family. As to quaternary structure, part of the 30S ribosomal subunit.

Functionally, involved in the binding of tRNA to the ribosomes. This chain is Small ribosomal subunit protein uS10, found in Bifidobacterium longum subsp. infantis (strain ATCC 15697 / DSM 20088 / JCM 1222 / NCTC 11817 / S12).